The chain runs to 101 residues: Apolipoprotein C-II (101 aa).

Residues 1–22 form the signal peptide; the sequence is MGTRFLLALFLVLLVLGFEVQG. Residues 66–74 are lipid binding; sequence TVDEKLRDM. A lipoprotein lipase cofactor region spans residues 78-101; the sequence is STAAMSTYAGILTDQVLSMLKGEE.

This sequence belongs to the apolipoprotein C2 family. Post-translationally, proapolipoprotein C-II is synthesized as a sialic acid containing glycoprotein which is subsequently desialylated prior to its proteolytic processing. Proapolipoprotein C-II, the major form found in plasma undergoes proteolytic cleavage of its N-terminal hexapeptide to generate apolipoprotein C-II, which occurs as the minor form in plasma.

The protein resides in the secreted. Component of chylomicrons, very low-density lipoproteins (VLDL), low-density lipoproteins (LDL), and high-density lipoproteins (HDL) in plasma. Plays an important role in lipoprotein metabolism as an activator of lipoprotein lipase. Both proapolipoprotein C-II and apolipoprotein C-II can activate lipoprotein lipase. This is Apolipoprotein C-II (APOC2) from Plecturocebus moloch (Dusky titi monkey).